The chain runs to 54 residues: UPF0391 membrane protein Oant_1245 (54 aa).

2 helical membrane-spanning segments follow: residues 5–25 (ALVF…GIAG) and 29–48 (GIAQ…SLIA).

The protein belongs to the UPF0391 family.

It is found in the cell membrane. The sequence is that of UPF0391 membrane protein Oant_1245 from Brucella anthropi (strain ATCC 49188 / DSM 6882 / CCUG 24695 / JCM 21032 / LMG 3331 / NBRC 15819 / NCTC 12168 / Alc 37) (Ochrobactrum anthropi).